The primary structure comprises 537 residues: Tegument protein BRRF2 (537 aa).

Disordered regions lie at residues 322-466 (PRFL…AEEF) and 486-537 (GLRV…LSVV). Positions 334–347 (EPQQTCSQLTSRGN) are enriched in polar residues. Low complexity predominate over residues 420-441 (VTGSSQAAPSSSSVTPVASLSG). Over residues 492–517 (DEDEDGSEDGEFSDLDLSDSDHEGDE) the composition is skewed to acidic residues.

The protein belongs to the lymphocryptovirus BRRF2 family.

It is found in the virion tegument. The chain is Tegument protein BRRF2 from Homo sapiens (Human).